Here is a 203-residue protein sequence, read N- to C-terminus: Probable chemoreceptor glutamine deamidase CheD (203 aa).

The protein belongs to the CheD family.

The catalysed reaction is L-glutaminyl-[protein] + H2O = L-glutamyl-[protein] + NH4(+). Its function is as follows. Probably deamidates glutamine residues to glutamate on methyl-accepting chemotaxis receptors (MCPs), playing an important role in chemotaxis. The polypeptide is Probable chemoreceptor glutamine deamidase CheD (Methylobacillus flagellatus (strain ATCC 51484 / DSM 6875 / VKM B-1610 / KT)).